Reading from the N-terminus, the 115-residue chain is Transmembrane protein 14C (115 aa).

Helical transmembrane passes span 8–28, 33–53, 63–83, and 88–108; these read LVPLHYYGFGYAALVATGGII, AGSVPSLAAGLFFGGLAGLGA, VWVFLATSGTLAGIMGMRFYN, and MPAGLIAGASLLMVAPGVAKI.

The protein belongs to the TMEM14 family.

The protein resides in the mitochondrion membrane. In terms of biological role, required for normal heme biosynthesis. The polypeptide is Transmembrane protein 14C (Tmem14c) (Rattus norvegicus (Rat)).